The primary structure comprises 187 residues: Peptidyl-tRNA hydrolase (187 aa).

A tRNA-binding site is contributed by Tyr-14. His-19 (proton acceptor) is an active-site residue. Residues Tyr-63 and Asn-65 each contribute to the tRNA site.

The protein belongs to the PTH family. As to quaternary structure, monomer.

Its subcellular location is the cytoplasm. It carries out the reaction an N-acyl-L-alpha-aminoacyl-tRNA + H2O = an N-acyl-L-amino acid + a tRNA + H(+). In terms of biological role, hydrolyzes ribosome-free peptidyl-tRNAs (with 1 or more amino acids incorporated), which drop off the ribosome during protein synthesis, or as a result of ribosome stalling. Functionally, catalyzes the release of premature peptidyl moieties from peptidyl-tRNA molecules trapped in stalled 50S ribosomal subunits, and thus maintains levels of free tRNAs and 50S ribosomes. This chain is Peptidyl-tRNA hydrolase, found in Thermodesulfovibrio yellowstonii (strain ATCC 51303 / DSM 11347 / YP87).